A 266-amino-acid chain; its full sequence is MRLIPLATPQQVGKWAARHIVKRINDFNPTADRPFVLGLPTGGTPLEAYKALIEMHKAGQVSFKHVVTFNMDEYVGLPKDHPESYHSFMYRNFFDHVDIPEENINLLDGNAPDIDAECRRYEEKIRAYGKIHLFMGGVGNDGHIAFNEPASSLASRTRIKTLTHDTRVANSRFFGGDVNQVPKYALTVGVGTLLDAQEVMILVLGHVKAQALQAAVEGNVNHMWTISCLQLHPKAVIVCDEPSTMELKVKTLKYFTELEAENIKDL.

Aspartate 72 (proton acceptor; for enolization step) is an active-site residue. The For ring-opening step role is filled by aspartate 141. Residue histidine 143 is the Proton acceptor; for ring-opening step of the active site. The active-site For ring-opening step is glutamate 148.

Belongs to the glucosamine/galactosamine-6-phosphate isomerase family. NagB subfamily. Homohexamer.

It carries out the reaction alpha-D-glucosamine 6-phosphate + H2O = beta-D-fructose 6-phosphate + NH4(+). The protein operates within amino-sugar metabolism; N-acetylneuraminate degradation; D-fructose 6-phosphate from N-acetylneuraminate: step 5/5. Its activity is regulated as follows. Allosterically activated by N-acetylglucosamine 6-phosphate (GlcNAc6P). Functionally, catalyzes the reversible isomerization-deamination of glucosamine 6-phosphate (GlcN6P) to form fructose 6-phosphate (Fru6P) and ammonium ion. This Cronobacter sakazakii (strain ATCC BAA-894) (Enterobacter sakazakii) protein is Glucosamine-6-phosphate deaminase.